Reading from the N-terminus, the 619-residue chain is 2-isopropylmalate synthase (619 aa).

In terms of domain architecture, Pyruvate carboxyltransferase spans 61 to 336; the sequence is PRWLSTDLRD…SPNLDFSDLT (276 aa). Residues Asp-70, His-275, His-277, and Asn-311 each coordinate a divalent metal cation.

The protein belongs to the alpha-IPM synthase/homocitrate synthase family. LeuA type 2 subfamily. As to quaternary structure, homodimer. A divalent metal cation is required as a cofactor.

The protein localises to the cytoplasm. Its subcellular location is the mitochondrion. It carries out the reaction 3-methyl-2-oxobutanoate + acetyl-CoA + H2O = (2S)-2-isopropylmalate + CoA + H(+). The protein operates within amino-acid biosynthesis; L-leucine biosynthesis; L-leucine from 3-methyl-2-oxobutanoate: step 1/4. Its function is as follows. Catalyzes the condensation of the acetyl group of acetyl-CoA with 3-methyl-2-oxobutanoate (2-oxoisovalerate) to form 3-carboxy-3-hydroxy-4-methylpentanoate (2-isopropylmalate). In Saccharomyces cerevisiae (strain ATCC 204508 / S288c) (Baker's yeast), this protein is 2-isopropylmalate synthase (LEU4).